Consider the following 386-residue polypeptide: Cytochrome b (386 aa).

Helical transmembrane passes span 32–52 (TGSLTGLCLVIQIASGIFTAM), 76–98 (YLIRYIHANGASFFFVCMYGHIG), 113–133 (VWVIGVIIFITTMATAFTGYC), and 179–199 (FFALHYLCPFILAALVVMHLM). Heme b contacts are provided by H82 and H96. Heme b is bound by residues H183 and H197. H202 is a binding site for a ubiquinone. 4 consecutive transmembrane segments (helical) span residues 225–245 (FVFKDLVTVFVFLLIFSTFVF), 289–309 (LGGVIAMFGSILITLVLPVTD), 321–341 (FSKTLYFTFTYNFILLGQLGQ), and 348–368 (FIEMGQIATFNYFTYFIVLVP).

The protein belongs to the cytochrome b family. As to quaternary structure, fungal cytochrome b-c1 complex contains 10 subunits; 3 respiratory subunits, 2 core proteins and 5 low-molecular weight proteins. Cytochrome b-c1 complex is a homodimer. Heme b serves as cofactor.

Its subcellular location is the mitochondrion inner membrane. In terms of biological role, component of the ubiquinol-cytochrome c reductase complex (complex III or cytochrome b-c1 complex) that is part of the mitochondrial respiratory chain. The b-c1 complex mediates electron transfer from ubiquinol to cytochrome c. Contributes to the generation of a proton gradient across the mitochondrial membrane that is then used for ATP synthesis. This chain is Cytochrome b (COB), found in Wickerhamomyces pijperi (Yeast).